Reading from the N-terminus, the 434-residue chain is MHDIKAIRDNPTAFDAAYTRRGLSPIADSLIKLDETRRIAILASEQAQARRNAASKEIGEAKKAKDNARAEVLMAEVAELKTTMPALEAAVKDADEALKTALSEIPNLPLADVPEGADEHGNVERHHFGAKRSYTFTPKAHDDLGEALGMMDFEAAAKLSGARFVVLKNGLARLERAIGQFFLDVHTGEHGYTEVNPPLLVKDDAMFGTAQLPKFRDDQFAAGAIGSGGEGYWLIPTAEVSLTNLVRESILDEKELPMRLTALTPCFRAEAGAAGRDTRGMIRQHQFTKVELVSITTPEKSKDEHERMLSCAEEVLRRLGLHYRVMTLCTGDMGFASQKTYDIEVWMPGQGEGGAYREISSCSVCGDFQARRMDARSRGPDGKPRFVHTLNGSGTAVGRALIAVIENYQQEDGSIAVPDVLLPYMGGLKVIAAA.

237–239 (TAE) provides a ligand contact to L-serine. 268 to 270 (RAE) lines the ATP pocket. Position 291 (Glu-291) interacts with L-serine. Residue 358–361 (EISS) participates in ATP binding. Position 393 (Ser-393) interacts with L-serine.

This sequence belongs to the class-II aminoacyl-tRNA synthetase family. Type-1 seryl-tRNA synthetase subfamily. Homodimer. The tRNA molecule binds across the dimer.

The protein localises to the cytoplasm. It carries out the reaction tRNA(Ser) + L-serine + ATP = L-seryl-tRNA(Ser) + AMP + diphosphate + H(+). The enzyme catalyses tRNA(Sec) + L-serine + ATP = L-seryl-tRNA(Sec) + AMP + diphosphate + H(+). Its pathway is aminoacyl-tRNA biosynthesis; selenocysteinyl-tRNA(Sec) biosynthesis; L-seryl-tRNA(Sec) from L-serine and tRNA(Sec): step 1/1. Functionally, catalyzes the attachment of serine to tRNA(Ser). Is also able to aminoacylate tRNA(Sec) with serine, to form the misacylated tRNA L-seryl-tRNA(Sec), which will be further converted into selenocysteinyl-tRNA(Sec). The polypeptide is Serine--tRNA ligase (Rhodopseudomonas palustris (strain BisB5)).